Consider the following 259-residue polypeptide: UPF0246 protein PST_1170 (259 aa).

This sequence belongs to the UPF0246 family.

This is UPF0246 protein PST_1170 from Stutzerimonas stutzeri (strain A1501) (Pseudomonas stutzeri).